We begin with the raw amino-acid sequence, 293 residues long: Protein BOBBER 2 (293 aa).

At Ala2 the chain carries N-acetylalanine. Residues 50–80 (EKEIVAAVMAAKQRLREAEKKKLEKESVKSM) are a coiled coil. Composition is skewed to basic and acidic residues over residues 67–102 (AEKK…KEES) and 110–120 (EIEKPKEEKES). A disordered region spans residues 67-125 (AEKKKLEKESVKSMEVEKPKKDSLKPTELEKPKEESLMATDPMEIEKPKEEKESGPIVP). One can recognise a CS domain in the interval 131–220 (LDFEKYSWGQ…DQMEWWKYCV (90 aa)).

Its subcellular location is the cytoplasm. The protein resides in the cytoplasmic granule. Functionally, small heat shock protein required for the establishment of auxin gradients and for patterning of the apical domain of the embryo. Involved in the specification of the cotyledon primordia. Also required for normal inflorescence and floral meristem function, normal developmental patterning and thermotolerance. Acts as a molecular chaperone. This Arabidopsis thaliana (Mouse-ear cress) protein is Protein BOBBER 2 (BOB2).